Consider the following 275-residue polypeptide: Exosome complex component Rrp42 (275 aa).

This sequence belongs to the RNase PH family. Rrp42 subfamily. Component of the archaeal exosome complex. Forms a hexameric ring-like arrangement composed of 3 Rrp41-Rrp42 heterodimers. The hexameric ring associates with a trimer of Rrp4 and/or Csl4 subunits.

It is found in the cytoplasm. Its function is as follows. Non-catalytic component of the exosome, which is a complex involved in RNA degradation. Contributes to the structuring of the Rrp41 active site. This chain is Exosome complex component Rrp42, found in Saccharolobus islandicus (strain Y.N.15.51 / Yellowstone #2) (Sulfolobus islandicus).